A 145-amino-acid chain; its full sequence is Ribonuclease H (145 aa).

The 142-residue stretch at 1 to 142 (MDTPVYLYTD…ADDLANRGAA (142 aa)) folds into the RNase H type-1 domain. The Mg(2+) site is built by Asp-10, Glu-48, Asp-70, and Asp-134.

Belongs to the RNase H family. Monomer. Mg(2+) serves as cofactor.

It localises to the cytoplasm. It catalyses the reaction Endonucleolytic cleavage to 5'-phosphomonoester.. Its function is as follows. Endonuclease that specifically degrades the RNA of RNA-DNA hybrids. The protein is Ribonuclease H of Neisseria gonorrhoeae (strain ATCC 700825 / FA 1090).